We begin with the raw amino-acid sequence, 694 residues long: Beta-galactosidase (694 aa).

A disordered region spans residues 1–31 (MGKRFPSGWFSPRVHPPRRQRSPMTNQATPG). The span at 22-31 (SPMTNQATPG) shows a compositional bias: polar residues. Substrate is bound by residues R144 and N182. Catalysis depends on E183, which acts as the Proton donor. Catalysis depends on E341, which acts as the Nucleophile. Substrate is bound by residues W349 and 389–392 (EKFH).

This sequence belongs to the glycosyl hydrolase 42 family. In terms of assembly, homotrimer.

It carries out the reaction Hydrolysis of terminal non-reducing beta-D-galactose residues in beta-D-galactosides.. With respect to regulation, strongly inhibited by glucose. No activity is lost during treatment with 100 mM EDTA after 2 hours. Activity not considerably affected by metal ions (5 mM), including Na(+), K(+), Mg(2+), Co(2+) and Ca(2+). Completely inhibited by Cu(2+) and Zn(2+) (5 mM) and is strongly inhibited by Mn(2+) (11%), Fe(2+) (25%) and Ni(2+) (38%) in comparison with the activity in the absence of cations (100%). Activity not affected by dithiothreitol, beta-mercaptoethanol and L-cysteine whereas reduced glutathione almost completely inactivates it. With ONPG as substrate, the addition of ethanol up to 20% still slightly stimulates activity. The activity increases up to 120% in the presence of 8% v/v ethanol at pH 5.5. Functionally, hydrolyzes p-nitrophenyl-beta-D-galactopyranoside (PNPG), o-nitrophenyl-beta-D-galactopyranoside (ONPG) and chromogen 5-bromo-4-chloro-3-indolyl-beta-D-galactopyranoside (X-gal), with highest activity against PNPG. Also acts on p-nitrophenyl-beta-D-glucopyranoside (PNPGlu) and o-nitrophenyl-beta-D-glucopyranoside (ONPGlu), but with significantly lower activity. This is Beta-galactosidase from Arthrobacter sp.